Consider the following 478-residue polypeptide: Calcitonin receptor (478 aa).

The N-terminal stretch at 1–22 (MRFTFTRQFLAFFILISNPASI) is a signal peptide. The Extracellular segment spans residues 23-146 (LPRSENLTFP…FTPEKLQNAY (124 aa)). Residues Asn-28, Asn-73, Asn-125, and Asn-130 are each glycosylated (N-linked (GlcNAc...) asparagine). Cystine bridges form between Cys-55–Cys-81, Cys-72–Cys-112, and Cys-95–Cys-134. The helical transmembrane segment at 147–169 (VLYYLAIVGHSMSIITLVVSLGI) threads the bilayer. Residues 170 to 181 (FVYFRSLGCQRV) are Cytoplasmic-facing. Residues 182–202 (TLHKNMFLTYILNSMIIIIHL) form a helical membrane-spanning segment. Topologically, residues 203 to 219 (VEVVPNGELVRKDPVSC) are extracellular. Cys-219 and Cys-289 form a disulfide bridge. Residues 220-242 (KILHFFHQYMMACNYFWMLCEGI) form a helical membrane-spanning segment. Topologically, residues 243-259 (YLHTLIVVSVFNEAKHL) are cytoplasmic. Residues 260–280 (RWYYLLGWGFPLVPTTIHAIT) form a helical membrane-spanning segment. Over 281–296 (RALYFNDNCWISVDTH) the chain is Extracellular. A helical membrane pass occupies residues 297–320 (LLYIIHGPVMVALVVNFFFLLNIV). Topologically, residues 321–340 (RVLVTKMRETHEAESYMYLK) are cytoplasmic. A helical transmembrane segment spans residues 341 to 359 (AVKATMILVPLLGIQFVVF). Residues 360 to 367 (PWRPSNKV) are Extracellular-facing. A helical membrane pass occupies residues 368–394 (LGKIYDYFMHSLIHFQGFFVATIYCFC). Residues 395–478 (NNEVQTTLKR…LNIIEKESSA (84 aa)) are Cytoplasmic-facing.

The protein belongs to the G-protein coupled receptor 2 family. As to quaternary structure, heterodimer of CALCR and RAMP1, RAMP2 or RAMP3; the receptor complexes function as AMYR1, AMYR2 and AMYR3 receptors, respectively, and respond to amylin/IAPP, calcitonin/CT and CGRP1 ligands. Interacts with GPRASP2.

It is found in the cell membrane. G protein-coupled receptor activated by ligand peptides amylin (IAPP), calcitonin (CT/CALCA) and calcitonin gene-related peptide type 1 (CGRP1/CALCA). CALCR interacts with receptor-activity-modifying proteins RAMP1, 2 and 3 to form receptor complexes AMYR1, 2 and 3, respectively. IAPP, CT and CGRP1 activate CALCR and AMYRs with distinct modes of receptor activation resulting in specific phenotypes. Ligand binding causes a conformation change that triggers signaling via guanine nucleotide-binding proteins (G proteins) and modulates the activity of downstream effectors. Activates cAMP-dependent pathway. This chain is Calcitonin receptor, found in Cavia porcellus (Guinea pig).